A 126-amino-acid chain; its full sequence is Aspartate 1-decarboxylase (126 aa).

The Schiff-base intermediate with substrate; via pyruvic acid role is filled by S25. The residue at position 25 (S25) is a Pyruvic acid (Ser). A substrate-binding site is contributed by T57. Y58 acts as the Proton donor in catalysis. 73 to 75 (GAA) contacts substrate.

Belongs to the PanD family. As to quaternary structure, heterooctamer of four alpha and four beta subunits. The cofactor is pyruvate. Is synthesized initially as an inactive proenzyme, which is activated by self-cleavage at a specific serine bond to produce a beta-subunit with a hydroxyl group at its C-terminus and an alpha-subunit with a pyruvoyl group at its N-terminus.

It is found in the cytoplasm. It carries out the reaction L-aspartate + H(+) = beta-alanine + CO2. The protein operates within cofactor biosynthesis; (R)-pantothenate biosynthesis; beta-alanine from L-aspartate: step 1/1. Catalyzes the pyruvoyl-dependent decarboxylation of aspartate to produce beta-alanine. This Saccharophagus degradans (strain 2-40 / ATCC 43961 / DSM 17024) protein is Aspartate 1-decarboxylase.